Consider the following 66-residue polypeptide: Large ribosomal subunit protein bL33c (66 aa).

Belongs to the bacterial ribosomal protein bL33 family.

It is found in the plastid. The protein localises to the chloroplast. The polypeptide is Large ribosomal subunit protein bL33c (Populus alba (White poplar)).